Here is a 101-residue protein sequence, read N- to C-terminus: MEPVDPNREPWNHPGSQPKTACTNCYCKKCCYHCQVCFLQKGLGISYGRKKRRQRRSAPPGSKNHQDLIPEQPLFQTQRKPTGPEESKKEVESKAEPDRFD.

The interaction with human CREBBP stretch occupies residues 1–24; it reads MEPVDPNREPWNHPGSQPKTACTN. Positions 1-48 are transactivation; that stretch reads MEPVDPNREPWNHPGSQPKTACTNCYCKKCCYHCQVCFLQKGLGISYG. The Zn(2+) site is built by Cys-22, Cys-25, and Cys-27. Residues 22–37 are cysteine-rich; the sequence is CTNCYCKKCCYHCQVC. Lys-28 is modified (N6-acetyllysine; by host PCAF). The Zn(2+) site is built by Cys-30, His-33, Cys-34, and Cys-37. The segment at 38 to 48 is core; sequence FLQKGLGISYG. A disordered region spans residues 48-101; sequence GRKKRRQRRSAPPGSKNHQDLIPEQPLFQTQRKPTGPEESKKEVESKAEPDRFD. The Nuclear localization signal, RNA-binding (TAR), and protein transduction motif lies at 49–57; that stretch reads RKKRRQRRS. The segment at 49–86 is interaction with the host capping enzyme RNGTT; sequence RKKRRQRRSAPPGSKNHQDLIPEQPLFQTQRKPTGPEE. Lys-50 and Lys-51 each carry N6-acetyllysine; by host EP300 and GCN5L2. Residues Arg-52 and Arg-53 each carry the asymmetric dimethylarginine; by host PRMT6 modification. Basic and acidic residues predominate over residues 82–101; the sequence is TGPEESKKEVESKAEPDRFD.

Belongs to the lentiviruses Tat family. As to quaternary structure, interacts with host CCNT1. Associates with the P-TEFb complex composed at least of Tat, P-TEFb (CDK9 and CCNT1), TAR RNA, RNA Pol II. Recruits the HATs CREBBP, TAF1/TFIID, EP300, PCAF and GCN5L2. Interacts with host KAT5/Tip60; this interaction targets the latter to degradation. Interacts with the host deacetylase SIRT1. Interacts with host capping enzyme RNGTT; this interaction stimulates RNGTT. Binds to host KDR, and to the host integrins ITGAV/ITGB3 and ITGA5/ITGB1. Interacts with host KPNB1/importin beta-1 without previous binding to KPNA1/importin alpha-1. Interacts with EIF2AK2. Interacts with host nucleosome assembly protein NAP1L1; this interaction may be required for the transport of Tat within the nucleus, since the two proteins interact at the nuclear rim. Interacts with host C1QBP/SF2P32; this interaction involves lysine-acetylated Tat. Interacts with the host chemokine receptors CCR2, CCR3 and CXCR4. Interacts with host DPP4/CD26; this interaction may trigger an anti-proliferative effect. Interacts with host LDLR. Interacts with the host extracellular matrix metalloproteinase MMP1. Interacts with host PRMT6; this interaction mediates Tat's methylation. Interacts with, and is ubiquitinated by MDM2/Hdm2. Interacts with host PSMC3 and HTATIP2. Interacts with STAB1; this interaction may overcome SATB1-mediated repression of IL2 and IL2RA (interleukin) in T cells by binding to the same domain than HDAC1. Interacts (when acetylated) with human CDK13, thereby increasing HIV-1 mRNA splicing and promoting the production of the doubly spliced HIV-1 protein Nef. Interacts with host TBP; this interaction modulates the activity of transcriptional pre-initiation complex. Interacts with host RELA. Interacts with host PLSCR1; this interaction negatively regulates Tat transactivation activity by altering its subcellular distribution. Asymmetrical arginine methylation by host PRMT6 seems to diminish the transactivation capacity of Tat and affects the interaction with host CCNT1. In terms of processing, acetylation by EP300, CREBBP, GCN5L2/GCN5 and PCAF regulates the transactivation activity of Tat. EP300-mediated acetylation of Lys-50 promotes dissociation of Tat from the TAR RNA through the competitive binding to PCAF's bromodomain. In addition, the non-acetylated Tat's N-terminus can also interact with PCAF. PCAF-mediated acetylation of Lys-28 enhances Tat's binding to CCNT1. Lys-50 is deacetylated by SIRT1. Post-translationally, polyubiquitination by host MDM2 does not target Tat to degradation, but activates its transactivation function and fosters interaction with CCNT1 and TAR RNA. Phosphorylated by EIF2AK2 on serine and threonine residues adjacent to the basic region important for TAR RNA binding and function. Phosphorylation of Tat by EIF2AK2 is dependent on the prior activation of EIF2AK2 by dsRNA.

It is found in the host nucleus. The protein resides in the host nucleolus. The protein localises to the host cytoplasm. Its subcellular location is the secreted. In terms of biological role, transcriptional activator that increases RNA Pol II processivity, thereby increasing the level of full-length viral transcripts. Recognizes a hairpin structure at the 5'-LTR of the nascent viral mRNAs referred to as the transactivation responsive RNA element (TAR) and recruits the cyclin T1-CDK9 complex (P-TEFb complex) that will in turn hyperphosphorylate the RNA polymerase II to allow efficient elongation. The CDK9 component of P-TEFb and other Tat-activated kinases hyperphosphorylate the C-terminus of RNA Pol II that becomes stabilized and much more processive. Other factors such as HTATSF1/Tat-SF1, SUPT5H/SPT5, and HTATIP2 are also important for Tat's function. Besides its effect on RNA Pol II processivity, Tat induces chromatin remodeling of proviral genes by recruiting the histone acetyltransferases (HATs) CREBBP, EP300 and PCAF to the chromatin. This also contributes to the increase in proviral transcription rate, especially when the provirus integrates in transcriptionally silent region of the host genome. To ensure maximal activation of the LTR, Tat mediates nuclear translocation of NF-kappa-B by interacting with host RELA. Through its interaction with host TBP, Tat may also modulate transcription initiation. Tat can reactivate a latently infected cell by penetrating in it and transactivating its LTR promoter. In the cytoplasm, Tat is thought to act as a translational activator of HIV-1 mRNAs. Extracellular circulating Tat can be endocytosed by surrounding uninfected cells via the binding to several surface receptors such as CD26, CXCR4, heparan sulfate proteoglycans (HSPG) or LDLR. Neurons are rarely infected, but they internalize Tat via their LDLR. Through its interaction with nuclear HATs, Tat is potentially able to control the acetylation-dependent cellular gene expression. Modulates the expression of many cellular genes involved in cell survival, proliferation or in coding for cytokines or cytokine receptors. Tat plays a role in T-cell and neurons apoptosis. Tat induced neurotoxicity and apoptosis probably contribute to neuroAIDS. Circulating Tat also acts as a chemokine-like and/or growth factor-like molecule that binds to specific receptors on the surface of the cells, affecting many cellular pathways. In the vascular system, Tat binds to ITGAV/ITGB3 and ITGA5/ITGB1 integrins dimers at the surface of endothelial cells and competes with bFGF for heparin-binding sites, leading to an excess of soluble bFGF. The sequence is that of Protein Tat from Human immunodeficiency virus type 1 group M subtype J (isolate SE9173) (HIV-1).